A 584-amino-acid polypeptide reads, in one-letter code: Phenylalanine--tRNA ligase beta subunit (584 aa).

Residues 290–369 (FSVRTKTVTH…RALGFNSLEP (80 aa)) enclose the B5 domain. Asp347, Asp353, Asp356, and Asp357 together coordinate Mg(2+).

The protein belongs to the phenylalanyl-tRNA synthetase beta subunit family. Type 2 subfamily. Tetramer of two alpha and two beta subunits. It depends on Mg(2+) as a cofactor.

It localises to the cytoplasm. It carries out the reaction tRNA(Phe) + L-phenylalanine + ATP = L-phenylalanyl-tRNA(Phe) + AMP + diphosphate + H(+). This Haloarcula marismortui (strain ATCC 43049 / DSM 3752 / JCM 8966 / VKM B-1809) (Halobacterium marismortui) protein is Phenylalanine--tRNA ligase beta subunit.